The following is a 976-amino-acid chain: Vacuolar membrane protease (976 aa).

Residues 1–15 (MKLKSVFRSVLKYRK) lie on the Cytoplasmic side of the membrane. Residues 16 to 36 (TNLSLLLLITYSIITLLYIFD) form a helical membrane-spanning segment. Residues 37–359 (HERYKLNLPK…KFFVISAKTL (323 aa)) are Vacuolar-facing. N-linked (GlcNAc...) asparagine glycosylation is found at asparagine 96 and asparagine 121. 2 residues coordinate Zn(2+): histidine 156 and aspartate 168. Asparagine 189 carries N-linked (GlcNAc...) asparagine glycosylation. Glutamate 200 functions as the Proton acceptor in the catalytic mechanism. Glutamate 201 serves as a coordination point for Zn(2+). N-linked (GlcNAc...) asparagine glycans are attached at residues asparagine 212 and asparagine 217. Residues glutamate 226 and histidine 300 each contribute to the Zn(2+) site. A helical membrane pass occupies residues 360–380 (FYWNCIFLLVSPVVAIGLYLI). The Cytoplasmic segment spans residues 381 to 392 (SRDRMTWKSHSW). Residues 393–412 (LSWTRFPLSLAAGIIVQKLF) form a helical membrane-spanning segment. Residues 413 to 428 (SNDIIRSNPLTFSRNY) lie on the Vacuolar side of the membrane. The chain crosses the membrane as a helical span at residues 429-449 (FWPISAFFTQVIFTSYVLINC). Residues 450–461 (SNFFFPCADMKS) lie on the Cytoplasmic side of the membrane. Residues 462 to 482 (LSIIELFIILWTILLFTSKLL) traverse the membrane as a helical segment. At 483-496 (YSSDYRYTGLYPLS) the chain is on the vacuolar side. A helical membrane pass occupies residues 497-517 (IFFLLSTIAAILRLLALALGM). The Cytoplasmic portion of the chain corresponds to 518-627 (RTRKRLGREC…NSLKLEYTDY (110 aa)). The interval 528-610 (RDHHSNYSSH…PLLKGSNSME (83 aa)) is disordered. Polar residues predominate over residues 549–558 (NLEQPQDQFT). The segment covering 559–570 (SSQDDQASIQDD) has biased composition (low complexity). Basic and acidic residues predominate over residues 582-601 (NVDEDHGMDSSSQQHDERVP). The helical transmembrane segment at 628-648 (AWIIQFLLIVPIPSFILFNSV) threads the bilayer. Over 649 to 668 (DVIMDALNHTVQEGSKATFD) the chain is Vacuolar. N-linked (GlcNAc...) asparagine glycosylation occurs at asparagine 656. Residues 669-689 (VLRFGMVGSILMALPILPFFY) traverse the membrane as a helical segment. At 690-692 (KVN) the chain is on the cytoplasmic side. A helical membrane pass occupies residues 693–713 (YITISLTALLFLISASKTLLV). The Vacuolar portion of the chain corresponds to 714-976 (HPFTNSNPLK…LVIVKDAIIL (263 aa)). 5 N-linked (GlcNAc...) asparagine glycosylation sites follow: asparagine 768, asparagine 796, asparagine 811, asparagine 866, and asparagine 937.

This sequence belongs to the peptidase M28 family. It depends on Zn(2+) as a cofactor.

It is found in the vacuole membrane. Functionally, may be involved in vacuolar sorting and osmoregulation. The polypeptide is Vacuolar membrane protease (Saccharomyces cerevisiae (strain YJM789) (Baker's yeast)).